Consider the following 339-residue polypeptide: Methylthioribose-1-phosphate isomerase (339 aa).

Residues 49–51 (RGA), Arg86, and Gln187 contribute to the substrate site. Catalysis depends on Asp228, which acts as the Proton donor. 238 to 239 (NK) is a binding site for substrate.

The protein belongs to the eIF-2B alpha/beta/delta subunits family. MtnA subfamily.

It carries out the reaction 5-(methylsulfanyl)-alpha-D-ribose 1-phosphate = 5-(methylsulfanyl)-D-ribulose 1-phosphate. It participates in amino-acid biosynthesis; L-methionine biosynthesis via salvage pathway; L-methionine from S-methyl-5-thio-alpha-D-ribose 1-phosphate: step 1/6. Catalyzes the interconversion of methylthioribose-1-phosphate (MTR-1-P) into methylthioribulose-1-phosphate (MTRu-1-P). The chain is Methylthioribose-1-phosphate isomerase from Cronobacter sakazakii (strain ATCC BAA-894) (Enterobacter sakazakii).